The sequence spans 897 residues: Translation initiation factor IF-2 (897 aa).

2 disordered regions span residues 69 to 88 (RKTKSTISVQGTGGKNKEVQ) and 95 to 304 (RTYV…NAMK). Positions 101-161 (SALEDEQRQA…EEKARIEAQQ (61 aa)) are enriched in basic and acidic residues. Over residues 162-179 (KARQAQQPAKAAGSTAQQ) the composition is skewed to low complexity. Composition is skewed to basic and acidic residues over residues 180 to 196 (EAEKMAKREAEELKRQQ), 203 to 217 (KAEELAAKKAEEARV), 226 to 239 (WAEEEAARAKESSD), and 277 to 286 (RREDDRDARN). Residues 287–296 (PRARKGKRGK) show a composition bias toward basic residues. The tr-type G domain occupies 397–566 (PRAPVVTIMG…LIQSEVLELK (170 aa)). The G1 stretch occupies residues 406 to 413 (GHVDHGKT). 406 to 413 (GHVDHGKT) serves as a coordination point for GTP. Residues 431–435 (GITQH) are G2. The interval 452 to 455 (DTPG) is G3. GTP-binding positions include 452–456 (DTPGH) and 506–509 (NKID). The interval 506 to 509 (NKID) is G4. Positions 542–544 (SAK) are G5.

Belongs to the TRAFAC class translation factor GTPase superfamily. Classic translation factor GTPase family. IF-2 subfamily.

The protein localises to the cytoplasm. One of the essential components for the initiation of protein synthesis. Protects formylmethionyl-tRNA from spontaneous hydrolysis and promotes its binding to the 30S ribosomal subunits. Also involved in the hydrolysis of GTP during the formation of the 70S ribosomal complex. The chain is Translation initiation factor IF-2 from Aeromonas hydrophila subsp. hydrophila (strain ATCC 7966 / DSM 30187 / BCRC 13018 / CCUG 14551 / JCM 1027 / KCTC 2358 / NCIMB 9240 / NCTC 8049).